The primary structure comprises 333 residues: Fructose-1,6-bisphosphatase class 1 (333 aa).

Mg(2+) contacts are provided by Glu-92, Asp-114, Leu-116, and Asp-117. Substrate contacts are provided by residues 117–120 (DGSS) and Asn-209. Glu-279 serves as a coordination point for Mg(2+).

It belongs to the FBPase class 1 family. In terms of assembly, homotetramer. Mg(2+) is required as a cofactor.

The protein resides in the cytoplasm. The catalysed reaction is beta-D-fructose 1,6-bisphosphate + H2O = beta-D-fructose 6-phosphate + phosphate. It functions in the pathway carbohydrate biosynthesis; gluconeogenesis. This chain is Fructose-1,6-bisphosphatase class 1, found in Alkalilimnicola ehrlichii (strain ATCC BAA-1101 / DSM 17681 / MLHE-1).